We begin with the raw amino-acid sequence, 275 residues long: Membrane protein insertase MisCB (275 aa).

Residues Met1 to Leu18 form the signal peptide. Cys19 is lipidated: N-palmitoyl cysteine. Residue Cys19 is the site of S-diacylglycerol cysteine attachment. 5 helical membrane-spanning segments follow: residues Tyr63–Val83, Ala139–Ile159, Trp172–Val192, Leu219–Leu239, and Pro240–Thr260.

This sequence belongs to the OXA1/ALB3/YidC family. Type 2 subfamily. As to quaternary structure, mostly monomeric, it may also form dimers. Interacts with SpoIIIAE. Forms a complex with the F(1)F(0) ATP synthase in which can be found the alpha, beta, gamma, delta and epsilon subunits of F(1) and a, b and subunits of F(0). YqgA is found in the same complex.

The protein localises to the cell membrane. Its function is as follows. Required for the insertion and/or proper folding and/or complex formation of integral membrane proteins into the membrane. Involved in integration of membrane proteins that insert both dependently and independently of the Sec translocase complex, as well as at least some lipoproteins. Also involved in protein secretion processes. It has an overlapping, although partly distinct, function compared to SpoIIIJ(MisCB). The polypeptide is Membrane protein insertase MisCB (misCB) (Bacillus subtilis (strain 168)).